We begin with the raw amino-acid sequence, 413 residues long: Elongation factor 1-alpha (413 aa).

Residues 1 to 7, 77 to 81, and 139 to 142 contribute to the GTP site; these read HVDSGKS, DAPGH, and NKMD. The 228-residue stretch at 1–228 folds into the tr-type G domain; it reads HVDSGKSTTT…DAILPPARPT (228 aa). 5-glutamyl glycerylphosphorylethanolamine is present on residues Glu287 and Glu360.

This sequence belongs to the TRAFAC class translation factor GTPase superfamily. Classic translation factor GTPase family. EF-Tu/EF-1A subfamily.

It localises to the cytoplasm. Its function is as follows. This protein promotes the GTP-dependent binding of aminoacyl-tRNA to the A-site of ribosomes during protein biosynthesis. The protein is Elongation factor 1-alpha of Heliocheilus albipunctella (Millet head miner).